The chain runs to 330 residues: Phenylalanine--tRNA ligase alpha subunit (330 aa).

Glu254 serves as a coordination point for Mg(2+).

The protein belongs to the class-II aminoacyl-tRNA synthetase family. Phe-tRNA synthetase alpha subunit type 1 subfamily. As to quaternary structure, tetramer of two alpha and two beta subunits. It depends on Mg(2+) as a cofactor.

Its subcellular location is the cytoplasm. It catalyses the reaction tRNA(Phe) + L-phenylalanine + ATP = L-phenylalanyl-tRNA(Phe) + AMP + diphosphate + H(+). This is Phenylalanine--tRNA ligase alpha subunit (pheS) from Neisseria meningitidis serogroup A / serotype 4A (strain DSM 15465 / Z2491).